Reading from the N-terminus, the 618-residue chain is MSAPTKPHSPTFKPEPHSAANEPKHPAARPKHVALQQLTGAQAVIRSLEELGVDVIFGIPGGAVLPVYDPLFDSKKLRHVLVRHEQGAGHAASGYAHVTGRVGVCMATSGPGATNLVTPLADAQMDSIPVVAITGQVGRGLIGTDAFQEADISGITMPITKHNFLVRSGDDIPRVLAEAFHIAASGRPGAVLVDIPKDVLQGQCTFSWPPRMELPGYKPNTKPHSRQVREAAKLIAAARKPVLYVGGGVIRGEATEQLRELAELTGIPVVTTLMARGAFPDSHRQNLGMPGMHGTVAAVAALQRSDLLIALGTRFDDRVTGKLDSFAPEAKVIHADIDPAEIGKNRHADVPIVGDVKAVITELIAMLRHHHIPGTIEMADWWAYLNGVRKTYPLSYGPQSDGSLSPEYVIEKLGEIAGPDAVFVAGVGQHQMWAAQFIRYEKPRSWLNSGGLGTMGFAIPAAMGAKIALPGTEVWAIDGDGCFQMTNQELATCAVEGIPVKVALINNGNLGMVRQWQSLFYAERYSQTDLATHSHRIPDFVKLAEALGCVGLRCEREEDVVDVINQARAINDCPVVIDFIVGADAQVWPMVAAGTSNDEIQAARGIRPLFDDITEGHA.

Residues 1 to 30 (MSAPTKPHSPTFKPEPHSAANEPKHPAARP) form a disordered region. Thiamine diphosphate is bound at residue Glu-85. FAD-binding positions include Arg-187, 293–314 (HGTVAAVAALQRSDLLIALGTR), and 336–355 (DIDPAEIGKNRHADVPIVGD). Residues 429-509 (QHQMWAAQFI…VKVALINNGN (81 aa)) form a thiamine pyrophosphate binding region. Mg(2+) is bound by residues Asp-480 and Asn-507.

It belongs to the TPP enzyme family. Requires Mg(2+) as cofactor. Thiamine diphosphate serves as cofactor.

The catalysed reaction is 2 pyruvate + H(+) = (2S)-2-acetolactate + CO2. Its pathway is amino-acid biosynthesis; L-isoleucine biosynthesis; L-isoleucine from 2-oxobutanoate: step 1/4. The protein operates within amino-acid biosynthesis; L-valine biosynthesis; L-valine from pyruvate: step 1/4. In Mycobacterium bovis (strain ATCC BAA-935 / AF2122/97), this protein is Acetolactate synthase (ilvB).